We begin with the raw amino-acid sequence, 192 residues long: Fe/S biogenesis protein NfuA (192 aa).

[4Fe-4S] cluster contacts are provided by C149 and C152.

The protein belongs to the NfuA family. As to quaternary structure, homodimer. The cofactor is [4Fe-4S] cluster.

In terms of biological role, involved in iron-sulfur cluster biogenesis. Binds a 4Fe-4S cluster, can transfer this cluster to apoproteins, and thereby intervenes in the maturation of Fe/S proteins. Could also act as a scaffold/chaperone for damaged Fe/S proteins. The protein is Fe/S biogenesis protein NfuA of Shewanella putrefaciens (strain CN-32 / ATCC BAA-453).